The primary structure comprises 621 residues: Lethal(3)malignant brain tumor-like protein 4 (621 aa).

Positions Met1–Thr48 are disordered. 2 stretches are compositionally biased toward basic and acidic residues: residues Leu10–Gln20 and Glu28–Ser44. 3 MBT repeats span residues Trp52–Pro152, Phe160–Pro260, and Phe269–Pro364. The segment at Val370–Glu414 adopts a CCHHC-type zinc-finger fold. Zn(2+)-binding residues include Cys379, Cys384, His398, and Cys404. The region spanning Trp543 to Ser607 is the SAM domain.

The protein resides in the nucleus. Functionally, putative Polycomb group (PcG) protein. PcG proteins maintain the transcriptionally repressive state of genes, probably via a modification of chromatin, rendering it heritably changed in its expressibility. The protein is Lethal(3)malignant brain tumor-like protein 4 (L3mbtl4) of Mus musculus (Mouse).